The primary structure comprises 740 residues: Putative Pol polyprotein from transposon element Bs1 (740 aa).

Residues 469-503 (TAVAHNLLVQALFMDGRASDAYVVLEEMQNNGPFP) form a PPR repeat.

Its function is as follows. Bs1 is probably an active plant retrotransposon. The sequence is that of Putative Pol polyprotein from transposon element Bs1 from Zea mays (Maize).